The following is a 176-amino-acid chain: ATP synthase subunit delta (176 aa).

It belongs to the ATPase delta chain family. As to quaternary structure, F-type ATPases have 2 components, F(1) - the catalytic core - and F(0) - the membrane proton channel. F(1) has five subunits: alpha(3), beta(3), gamma(1), delta(1), epsilon(1). F(0) has three main subunits: a(1), b(2) and c(10-14). The alpha and beta chains form an alternating ring which encloses part of the gamma chain. F(1) is attached to F(0) by a central stalk formed by the gamma and epsilon chains, while a peripheral stalk is formed by the delta and b chains.

The protein resides in the cell inner membrane. Its function is as follows. F(1)F(0) ATP synthase produces ATP from ADP in the presence of a proton or sodium gradient. F-type ATPases consist of two structural domains, F(1) containing the extramembraneous catalytic core and F(0) containing the membrane proton channel, linked together by a central stalk and a peripheral stalk. During catalysis, ATP synthesis in the catalytic domain of F(1) is coupled via a rotary mechanism of the central stalk subunits to proton translocation. In terms of biological role, this protein is part of the stalk that links CF(0) to CF(1). It either transmits conformational changes from CF(0) to CF(1) or is implicated in proton conduction. This Campylobacter fetus subsp. fetus (strain 82-40) protein is ATP synthase subunit delta.